The following is a 1620-amino-acid chain: uncharacterized protein (1620 aa).

A Ubiquitin-like domain is found at 21–96; that stretch reads IRVTLKTLDD…VHLVDRGPSG (76 aa). 6 disordered regions span residues 621 to 648, 791 to 810, 842 to 874, 950 to 1016, 1219 to 1260, and 1537 to 1620; these read VATTGDAPSVPVETLPPPGSDQQPGTSR, TASSRNDYESVDGVEESQSD, RQFLENRGRIPSTSSAPSTSENPPGPSFNSEDA, QVVS…NPGH, RVPG…ADPR, and IAST…NNIQ. The segment covering 799 to 810 has biased composition (acidic residues); it reads ESVDGVEESQSD. The span at 852–871 shows a compositional bias: polar residues; it reads PSTSSAPSTSENPPGPSFNS. The segment covering 1225–1242 has biased composition (polar residues); that stretch reads ATRNASQNTTSVNQSTET. Low complexity-rich tracts occupy residues 1537–1556 and 1583–1620; these read IASTSSQPSTSSSSLNTVST and TSLSTSSPLTSQSSSSGTRTSSGSSGPSTSSTTTNNIQ.

This is an uncharacterized protein from Caenorhabditis elegans.